The following is a 134-amino-acid chain: Putative protein KRIP1 (134 aa).

Positions 1–134 (MSPVHRSRTS…PDPALPLQML (134 aa)) are disordered. 3 stretches are compositionally biased toward polar residues: residues 9 to 24 (TSQTQEAHKPTSTLSF), 43 to 55 (SQPNACSRQSHVS), and 64 to 79 (CSQSKVSPPGTATNPN). Residues 119 to 128 (PAKPALPDPA) are compositionally biased toward pro residues.

Abundant expression is found in prostate, restricted to cells of epithelial origin in normal and diseased glands. Very low expression is detected in pancreas and ovary.

It localises to the cytoplasm. Its subcellular location is the nucleus. In Homo sapiens (Human), this protein is Putative protein KRIP1 (KLKP1).